The following is a 197-amino-acid chain: Small ribosomal subunit protein uS5 (197 aa).

Basic and acidic residues predominate over residues Met-1–Glu-17. 2 disordered regions span residues Met-1–Phe-22 and Asn-158–Ala-197. Residues Phe-22–Val-85 form the S5 DRBM domain. Over residues Lys-172–Ile-186 the composition is skewed to basic and acidic residues.

Belongs to the universal ribosomal protein uS5 family. Part of the 30S ribosomal subunit. Contacts proteins S4 and S8.

Its function is as follows. With S4 and S12 plays an important role in translational accuracy. Functionally, located at the back of the 30S subunit body where it stabilizes the conformation of the head with respect to the body. This chain is Small ribosomal subunit protein uS5, found in Jannaschia sp. (strain CCS1).